The primary structure comprises 154 residues: Large-conductance mechanosensitive channel (154 aa).

Helical transmembrane passes span 12–32 (GNIV…ALIT) and 71–91 (IVLS…FLVV). The segment at 129–154 (NGAPSGRHVDTADLTPTPNHEPRADT) is disordered.

The protein belongs to the MscL family. In terms of assembly, homopentamer.

It localises to the cell membrane. Functionally, channel that opens in response to stretch forces in the membrane lipid bilayer. May participate in the regulation of osmotic pressure changes within the cell. This Mycobacterium leprae (strain Br4923) protein is Large-conductance mechanosensitive channel.